Here is a 160-residue protein sequence, read N- to C-terminus: Sulfur-rich protein (160 aa).

2 consecutive transmembrane segments (helical) span residues 63-83 (ITMIVLGIILLIAGLALTFVL) and 92-112 (FLFLIPAVIGLVKLLATSVFM).

It localises to the membrane. This is Sulfur-rich protein (srp) from Chlamydia abortus (strain DSM 27085 / S26/3) (Chlamydophila abortus).